The sequence spans 398 residues: Apolipoprotein L1 (398 aa).

Residues Met-1 to Ala-27 form the signal peptide. Polar residues predominate over residues Gln-35–Pro-47. A disordered region spans residues Gln-35–Trp-55. The N-linked (GlcNAc...) asparagine glycan is linked to Asn-261. Residues Pro-297–Gln-317 form a disordered region. Phosphoserine; by FAM20C occurs at positions 311 and 314.

This sequence belongs to the apolipoprotein L family. In plasma, interacts with APOA1 and mainly associated with large high density lipoprotein particles. In terms of processing, phosphorylated by FAM20C in the extracellular medium. Plasma. Found on APOA-I-containing high density lipoprotein (HDL3). Expressed in pancreas, lung, prostate, liver, placenta and spleen.

The protein resides in the secreted. In terms of biological role, may play a role in lipid exchange and transport throughout the body. May participate in reverse cholesterol transport from peripheral cells to the liver. The polypeptide is Apolipoprotein L1 (APOL1) (Homo sapiens (Human)).